Here is a 1270-residue protein sequence, read N- to C-terminus: ATP-dependent helicase/nuclease subunit A (1270 aa).

The UvrD-like helicase ATP-binding domain maps to 3-476 (TKWTEEQELA…IMLYKNFRSR (474 aa)). 24–31 (AAAGSGKT) lines the ATP pocket. One can recognise a UvrD-like helicase C-terminal domain in the interval 528-823 (IENLKVAGDI…RIMSIHKSKG (296 aa)).

The protein belongs to the helicase family. AddA subfamily. As to quaternary structure, heterodimer of AddA and AddB/RexB. Mg(2+) serves as cofactor.

It catalyses the reaction Couples ATP hydrolysis with the unwinding of duplex DNA by translocating in the 3'-5' direction.. The enzyme catalyses ATP + H2O = ADP + phosphate + H(+). Functionally, the heterodimer acts as both an ATP-dependent DNA helicase and an ATP-dependent, dual-direction single-stranded exonuclease. Recognizes the chi site generating a DNA molecule suitable for the initiation of homologous recombination. The AddA nuclease domain is required for chi fragment generation; this subunit has the helicase and 3' -&gt; 5' nuclease activities. This is ATP-dependent helicase/nuclease subunit A from Clostridium perfringens (strain SM101 / Type A).